A 2209-amino-acid polypeptide reads, in one-letter code: RNA-directed RNA polymerase L (2209 aa).

An endonuclease region spans residues Lys-26–Cys-284. The Mn(2+) site is built by Glu-51, Asp-89, and Glu-102. Lys-115 is a catalytic residue. The region spanning Cys-1172–Val-1369 is the RdRp catalytic domain. Asp-1330 is a Mg(2+) binding site.

It belongs to the Bunyavirales RNA polymerase family. As to quaternary structure, homomultimer; the oligomeric structure is essential for the polymerase activity. Interacts with nucleoprotein N. Interacts with protein Z; this interaction inhibits viral transcription and replication, Z partially blocks the product exit tunnel for the releasing nascent RNA product. Mn(2+) serves as cofactor. Mg(2+) is required as a cofactor.

It localises to the virion. Its subcellular location is the host cytoplasm. It catalyses the reaction RNA(n) + a ribonucleoside 5'-triphosphate = RNA(n+1) + diphosphate. Functionally, RNA-dependent RNA polymerase, which is responsible for the replication and transcription of the viral RNA genome using antigenomic RNA as an intermediate. During transcription, synthesizes subgenomic RNAs and assures their capping by a cap-snatching mechanism, which involves the endonuclease activity cleaving the host capped pre-mRNAs. These short capped RNAs are then used as primers for viral transcription. The 3'-end of subgenomic mRNAs molecules are heterogeneous and not polyadenylated. The replicase function is to direct synthesis of antigenomic and genomic RNA which are encapsidated and non capped. As a consequence of the use of the same enzyme for both transcription and replication, these mechanisms need to be well coordinated. These processes may be regulated by proteins N and Z in a dose-dependent manner. Z protein inhibits the viral polymerase L und thus the viral transcription and RNA synthesis. The chain is RNA-directed RNA polymerase L from Calomys callosus (Large vesper mouse).